The following is a 484-amino-acid chain: Glutamate--tRNA ligase (484 aa).

The short motif at 10-20 (PSPTGYLHVGG) is the 'HIGH' region element. The 'KMSKS' region motif lies at 252–256 (KLSKR). Lys-255 serves as a coordination point for ATP.

This sequence belongs to the class-I aminoacyl-tRNA synthetase family. Glutamate--tRNA ligase type 1 subfamily. As to quaternary structure, monomer.

The protein localises to the cytoplasm. It carries out the reaction tRNA(Glu) + L-glutamate + ATP = L-glutamyl-tRNA(Glu) + AMP + diphosphate. In terms of biological role, catalyzes the attachment of glutamate to tRNA(Glu) in a two-step reaction: glutamate is first activated by ATP to form Glu-AMP and then transferred to the acceptor end of tRNA(Glu). This Mycoplasma genitalium (strain ATCC 33530 / DSM 19775 / NCTC 10195 / G37) (Mycoplasmoides genitalium) protein is Glutamate--tRNA ligase.